A 130-amino-acid chain; its full sequence is Small ribosomal subunit protein uS11 (130 aa).

This sequence belongs to the universal ribosomal protein uS11 family. In terms of assembly, part of the 30S ribosomal subunit. Interacts with proteins S7 and S18. Binds to IF-3.

Its function is as follows. Located on the platform of the 30S subunit, it bridges several disparate RNA helices of the 16S rRNA. Forms part of the Shine-Dalgarno cleft in the 70S ribosome. The protein is Small ribosomal subunit protein uS11 of Latilactobacillus sakei subsp. sakei (strain 23K) (Lactobacillus sakei subsp. sakei).